Consider the following 188-residue polypeptide: dCTP deaminase (188 aa).

DCTP is bound by residues 111–116 (KSTYAR), 135–137 (TLE), Gln156, Tyr170, and Gln180. The active-site Proton donor/acceptor is the Glu137.

This sequence belongs to the dCTP deaminase family. As to quaternary structure, homotrimer.

It catalyses the reaction dCTP + H2O + H(+) = dUTP + NH4(+). It participates in pyrimidine metabolism; dUMP biosynthesis; dUMP from dCTP (dUTP route): step 1/2. Functionally, catalyzes the deamination of dCTP to dUTP. The sequence is that of dCTP deaminase from Nitrosomonas eutropha (strain DSM 101675 / C91 / Nm57).